Reading from the N-terminus, the 61-residue chain is Small ribosomal subunit protein uS14 (61 aa).

Zn(2+) is bound by residues C24, C27, C40, and C43.

The protein belongs to the universal ribosomal protein uS14 family. Zinc-binding uS14 subfamily. As to quaternary structure, part of the 30S ribosomal subunit. Contacts proteins S3 and S10. The cofactor is Zn(2+).

Binds 16S rRNA, required for the assembly of 30S particles and may also be responsible for determining the conformation of the 16S rRNA at the A site. The polypeptide is Small ribosomal subunit protein uS14 (Halalkalibacterium halodurans (strain ATCC BAA-125 / DSM 18197 / FERM 7344 / JCM 9153 / C-125) (Bacillus halodurans)).